A 209-amino-acid chain; its full sequence is ATP phosphoribosyltransferase (209 aa).

This sequence belongs to the ATP phosphoribosyltransferase family. Short subfamily. As to quaternary structure, heteromultimer composed of HisG and HisZ subunits.

Its subcellular location is the cytoplasm. The enzyme catalyses 1-(5-phospho-beta-D-ribosyl)-ATP + diphosphate = 5-phospho-alpha-D-ribose 1-diphosphate + ATP. Its pathway is amino-acid biosynthesis; L-histidine biosynthesis; L-histidine from 5-phospho-alpha-D-ribose 1-diphosphate: step 1/9. Functionally, catalyzes the condensation of ATP and 5-phosphoribose 1-diphosphate to form N'-(5'-phosphoribosyl)-ATP (PR-ATP). Has a crucial role in the pathway because the rate of histidine biosynthesis seems to be controlled primarily by regulation of HisG enzymatic activity. The chain is ATP phosphoribosyltransferase from Caldicellulosiruptor saccharolyticus (strain ATCC 43494 / DSM 8903 / Tp8T 6331).